A 756-amino-acid chain; its full sequence is Putative DNA ligase 052L (756 aa).

K103 acts as the N6-AMP-lysine intermediate in catalysis. Low complexity predominate over residues 610–620 (PSAAGSASPCR). Residues 610 to 630 (PSAAGSASPCRPTKRRDDWFD) are disordered. In terms of domain architecture, BRCT spans 648-742 (KKRPPMQGYV…LKRQRKCRAR (95 aa)).

It belongs to the NAD-dependent DNA ligase family.

The enzyme catalyses NAD(+) + (deoxyribonucleotide)n-3'-hydroxyl + 5'-phospho-(deoxyribonucleotide)m = (deoxyribonucleotide)n+m + AMP + beta-nicotinamide D-nucleotide.. In terms of biological role, catalyzes the formation of phosphodiester linkages between 5'-phosphoryl and 3'-hydroxyl groups in double-stranded DNA using NAD as a coenzyme and as the energy source for the reaction. The protein is Putative DNA ligase 052L of Invertebrate iridescent virus 3 (IIV-3).